The chain runs to 764 residues: Phosphoribosylformylglycinamidine synthase subunit PurL (764 aa).

Residue His57 is part of the active site. ATP-binding residues include Tyr60 and Lys104. Glu106 is a Mg(2+) binding site. Substrate contacts are provided by residues 107–110 (SHNH) and Arg129. Catalysis depends on His108, which acts as the Proton acceptor. Residue Asp130 coordinates Mg(2+). Gln258 serves as a coordination point for substrate. Asp286 serves as a coordination point for Mg(2+). 330–332 (ESQ) is a substrate binding site. 2 residues coordinate ATP: Asn518 and Gly555. Asn556 contributes to the Mg(2+) binding site. A substrate-binding site is contributed by Ser558.

The protein belongs to the FGAMS family. As to quaternary structure, monomer. Part of the FGAM synthase complex composed of 1 PurL, 1 PurQ and 2 PurS subunits.

It is found in the cytoplasm. The enzyme catalyses N(2)-formyl-N(1)-(5-phospho-beta-D-ribosyl)glycinamide + L-glutamine + ATP + H2O = 2-formamido-N(1)-(5-O-phospho-beta-D-ribosyl)acetamidine + L-glutamate + ADP + phosphate + H(+). It functions in the pathway purine metabolism; IMP biosynthesis via de novo pathway; 5-amino-1-(5-phospho-D-ribosyl)imidazole from N(2)-formyl-N(1)-(5-phospho-D-ribosyl)glycinamide: step 1/2. Part of the phosphoribosylformylglycinamidine synthase complex involved in the purines biosynthetic pathway. Catalyzes the ATP-dependent conversion of formylglycinamide ribonucleotide (FGAR) and glutamine to yield formylglycinamidine ribonucleotide (FGAM) and glutamate. The FGAM synthase complex is composed of three subunits. PurQ produces an ammonia molecule by converting glutamine to glutamate. PurL transfers the ammonia molecule to FGAR to form FGAM in an ATP-dependent manner. PurS interacts with PurQ and PurL and is thought to assist in the transfer of the ammonia molecule from PurQ to PurL. The sequence is that of Phosphoribosylformylglycinamidine synthase subunit PurL from Nocardia farcinica (strain IFM 10152).